A 501-amino-acid polypeptide reads, in one-letter code: Pyruvate kinase (501 aa).

Arg50 contacts substrate. K(+) contacts are provided by Asn52, Ser54, Asp85, and Thr86. 52–55 (NFSH) provides a ligand contact to ATP. ATP-binding residues include Arg92 and Lys178. Residue Glu243 coordinates Mg(2+). Substrate is bound by residues Gly266, Asp267, and Thr299. Asp267 serves as a coordination point for Mg(2+).

Belongs to the pyruvate kinase family. As to quaternary structure, homotetramer. Mg(2+) is required as a cofactor. K(+) serves as cofactor.

It catalyses the reaction pyruvate + ATP = phosphoenolpyruvate + ADP + H(+). It participates in carbohydrate degradation; glycolysis; pyruvate from D-glyceraldehyde 3-phosphate: step 5/5. This chain is Pyruvate kinase (PYK1), found in Kluyveromyces lactis (strain ATCC 8585 / CBS 2359 / DSM 70799 / NBRC 1267 / NRRL Y-1140 / WM37) (Yeast).